The following is a 396-amino-acid chain: Probable sugar efflux transporter (396 aa).

12 helical membrane-spanning segments follow: residues 15–35 (VVTL…PVGL), 50–70 (VGIM…PFML), 81–101 (LICL…SWSF), 103–123 (VLVI…SITA), 136–156 (AQAL…GLPL), 170–190 (FFAI…LLPL), 209–229 (PALM…YTAY), 246–266 (FATA…VIFG), 275–295 (ALVS…LPAA), 299–319 (IHLG…GLGM), 333–353 (VAMA…ALVG), and 364–384 (MIGY…IIIF).

It belongs to the major facilitator superfamily. SotB (TC 2.A.1.2) family.

It is found in the cell inner membrane. Involved in the efflux of sugars. The physiological role may be the reduction of the intracellular concentration of toxic sugars or sugar metabolites. This Escherichia coli O127:H6 (strain E2348/69 / EPEC) protein is Probable sugar efflux transporter.